Reading from the N-terminus, the 444-residue chain is Probable kynurenine--oxoglutarate transaminase BNA3 (444 aa).

K271 is subject to N6-(pyridoxal phosphate)lysine.

The protein belongs to the class-I pyridoxal-phosphate-dependent aminotransferase family. In terms of assembly, homodimer. Pyridoxal 5'-phosphate serves as cofactor.

The protein localises to the cytoplasm. The protein resides in the mitochondrion. The enzyme catalyses L-kynurenine + 2-oxoglutarate = kynurenate + L-glutamate + H2O. The protein operates within amino-acid degradation; L-kynurenine degradation; kynurenate from L-kynurenine: step 1/2. In terms of biological role, catalyzes the irreversible transamination of the L-tryptophan metabolite L-kynurenine to form kynurenic acid (KA). This chain is Probable kynurenine--oxoglutarate transaminase BNA3 (BNA3), found in Saccharomyces cerevisiae (strain ATCC 204508 / S288c) (Baker's yeast).